Here is a 172-residue protein sequence, read N- to C-terminus: Signal peptidase complex catalytic subunit SEC11 (172 aa).

The Cytoplasmic portion of the chain corresponds to 1–14; sequence MLSSLGNPRQAATQ. Residues 15 to 35 traverse the membrane as a helical; Signal-anchor for type II membrane protein segment; it reads LLNFALILSTAFMMWKGLSVA. At 36 to 172 the chain is on the lumenal side; the sequence is TDSPSPIVVV…MGLMVVLQRE (137 aa). Residues Ser-49, His-90, and Asp-115 each act as charge relay system in the active site. The C-terminal short (CTS) helix stretch occupies residues 158–169; that stretch reads AMLGIMGLMVVL.

It belongs to the peptidase S26B family. As to quaternary structure, component of the signal peptidase complex (SPC) composed of a catalytic subunit SEC11 and three accessory subunits SPC1, SPC2 and SPC3. The complex induces a local thinning of the ER membrane which is used to measure the length of the signal peptide (SP) h-region of protein substrates. This ensures the selectivity of the complex towards h-regions shorter than 18-20 amino acids. SPC associates with the translocon complex.

It is found in the endoplasmic reticulum membrane. The enzyme catalyses Cleavage of hydrophobic, N-terminal signal or leader sequences from secreted and periplasmic proteins.. In terms of biological role, catalytic component of the signal peptidase complex (SPC) which catalyzes the cleavage of N-terminal signal sequences from nascent proteins as they are translocated into the lumen of the endoplasmic reticulum. Specifically cleaves N-terminal signal peptides that contain a hydrophobic alpha-helix (h-region) shorter than 18-20 amino acids. In Pyricularia oryzae (strain 70-15 / ATCC MYA-4617 / FGSC 8958) (Rice blast fungus), this protein is Signal peptidase complex catalytic subunit SEC11 (SEC11).